The sequence spans 483 residues: Isocitrate dehydrogenase [NADP] (483 aa).

Thr-74 contributes to the NADP(+) binding site. Ser-83, Asn-85, Arg-89, Arg-99, and Arg-121 together coordinate D-threo-isocitrate. Mg(2+) is bound at residue Asp-232. Residues 264–270 and Asn-277 each bind NADP(+); that span reads HGSAPDI.

This sequence belongs to the isocitrate and isopropylmalate dehydrogenases family. Homodimer. Requires Mg(2+) as cofactor. The cofactor is Mn(2+).

It catalyses the reaction D-threo-isocitrate + NADP(+) = 2-oxoglutarate + CO2 + NADPH. Functionally, catalyzes the oxidative decarboxylation of isocitrate to 2-oxoglutarate and carbon dioxide with the concomitant reduction of NADP(+). This is Isocitrate dehydrogenase [NADP] (icd) from Rickettsia felis (strain ATCC VR-1525 / URRWXCal2) (Rickettsia azadi).